The following is a 1478-amino-acid chain: MVSSGCRMRSLWFIIIISFLPNTEGFSRAALPFGLVRRELSCEGYSIDLRCPGSDVIMIESANYGRTDDKICDADPFQMENTDCYLPDAFKIMTQRCNNRTQCIVVTGSDVFPDPCPGTYKYLEVQYECVPYMEQKVFVCPGTLKAIVDSPCIYEAEQKAGAWCKDPLQAADKIYFMPWTPYRTDTLIEYASLEDFQNSRQTTTYKLPNRVDGTGFVVYDGAVFFNKERTRNIVKYDLRTRIKSGEAIINYANYHDTSPYRWGGKTDIDLAVDENGLWVIYATEQNNGMIVISQLNPYTLRFEATWETVYDKRAASNAFMICGVLYVVRSVYQDNESETGKNAIDYIYNTRLNRGEYVDVPFPNQYQYIAAVDYNPRDNQLYVWNNNFILRYSLEFGPPDPAQVPTTAVTITSSAEMFKTTVSTTSTTSQKGPMSTTVAGSQEGSKGTKAPPAVSTTKIPPVTNIFPLPERFCEALDARGIRWPQTQRGMMVERPCPKGTRGTASYLCVLSTGTWNPKGPDLSNCTSHWVNQLAQKIRSGENAASLANELAKHTKGPVFAGDVSSSVRLMEQLVDILDAQLQELKPSEKDSAGRSYNKLQKREKTCRAYLKAIVDTVDNLLRPEALESWKHMNSSEQAHTATMLLDTLEEGAFVLADNLVEPTRVSMPTENIVLEVAVLSTEGQVQDFKFPLGIKGAGSSIQLSANTVKQNSRNGLAKLVFIIYRSLGQFLSTENATIKLGADFIGRNSTIAVNSHVISVSINKESSRVYLTDPVLFTLPHIDPDNYFNANCSFWNYSERTMMGYWSTQGCKLVDTNKTRTTCACSHLTNFAILMAHREIAYKDGVHELLLTVITWVGIVISLVCLAICIFTFCFFRGLQSDRNTIHKNLCINLFIAEFIFLIGIDKTKYMIACPIFAGLLHFFFLAAFAWMCLEGVQLYLMLVEVFESEYSRKKYYYVAGYLFPATVVGVSAAIDYKSYGTEKACWLHVDNYFIWSFIGPVTFIILLNIIFLVITLCKMVKHSNTLKPDSSRLENINNYRVCDGYYNTDLPGSWVLGAFALLCLLGLTWSFGLLFINEETIVMAYLFTIFNAFQGVFIFIFHCALQKKVRKEYGKCFRHSYCCGGLPTESPHSSVKASTTRTSARYSSGTQSRIRRMWNDTVRKQSESSFISGDINSTSTLNQGMTGNYLLTNPLLRPHGTNNPYNTLLAETVVCNAPSAPVFNSPGHSLNNARDTSAMDTLPLNGNFNNSYSLRKGDYNDSVQVVDCGLSLNDTAFEKMIISELVHNNLRGSSKAHNLELTLPVKPVIGGSSSEDDAIVADASSLMHGDNPGLELHHKELEAPLIPQRTHSLLYQPQKKAKPEGTDSYVSQLTAEAEDHLQSPNRDSLYTSMPNLRDSPYQESSPDMEEDLSPSRRSENEDIYYKSMPNLGAGHQLQMCYQISRGNSDGYIIPINKEGCIPEGDVREGQMQLVTSL.

The first 25 residues, 1–25, serve as a signal peptide directing secretion; sequence MVSSGCRMRSLWFIIIISFLPNTEG. The Extracellular segment spans residues 26-855; that stretch reads FSRAALPFGL…VHELLLTVIT (830 aa). The SUEL-type lectin domain occupies 41 to 130; sequence SCEGYSIDLR…KYLEVQYECV (90 aa). N-linked (GlcNAc...) asparagine glycosylation occurs at Asn-99. The Olfactomedin-like domain maps to 139–398; that stretch reads VCPGTLKAIV…ILRYSLEFGP (260 aa). The cysteines at positions 140 and 322 are disulfide-linked. N-linked (GlcNAc...) asparagine glycosylation is present at Asn-335. The tract at residues 422–458 is disordered; sequence VSTTSTTSQKGPMSTTVAGSQEGSKGTKAPPAVSTTK. Residues 430–445 show a composition bias toward polar residues; the sequence is QKGPMSTTVAGSQEGS. Residues Asn-524, Asn-633, Asn-735, Asn-748, Asn-791, Asn-796, and Asn-817 are each glycosylated (N-linked (GlcNAc...) asparagine). Residues 663-841 enclose the GAIN-B domain; that stretch reads TRVSMPTENI…AILMAHREIA (179 aa). Disulfide bonds link Cys-792–Cys-823 and Cys-811–Cys-825. Residues 792 to 841 form a GPS region; it reads CSFWNYSERTMMGYWSTQGCKLVDTNKTRTTCACSHLTNFAILMAHREIA. The chain crosses the membrane as a helical span at residues 856–876; that stretch reads WVGIVISLVCLAICIFTFCFF. Topologically, residues 877 to 884 are cytoplasmic; sequence RGLQSDRN. Residues 885-905 traverse the membrane as a helical segment; it reads TIHKNLCINLFIAEFIFLIGI. Over 906–911 the chain is Extracellular; it reads DKTKYM. A helical transmembrane segment spans residues 912-932; sequence IACPIFAGLLHFFFLAAFAWM. Over 933–955 the chain is Cytoplasmic; that stretch reads CLEGVQLYLMLVEVFESEYSRKK. The helical transmembrane segment at 956–976 threads the bilayer; it reads YYYVAGYLFPATVVGVSAAID. Residues 977-994 lie on the Extracellular side of the membrane; sequence YKSYGTEKACWLHVDNYF. Residues 995 to 1015 form a helical membrane-spanning segment; that stretch reads IWSFIGPVTFIILLNIIFLVI. Topologically, residues 1016-1056 are cytoplasmic; it reads TLCKMVKHSNTLKPDSSRLENINNYRVCDGYYNTDLPGSWV. Residues 1057–1077 form a helical membrane-spanning segment; that stretch reads LGAFALLCLLGLTWSFGLLFI. The Extracellular portion of the chain corresponds to 1078–1081; the sequence is NEET. A helical transmembrane segment spans residues 1082 to 1102; that stretch reads IVMAYLFTIFNAFQGVFIFIF. Over 1103 to 1478 the chain is Cytoplasmic; the sequence is HCALQKKVRK…EGQMQLVTSL (376 aa). A disordered region spans residues 1378-1419; it reads AEDHLQSPNRDSLYTSMPNLRDSPYQESSPDMEEDLSPSRRS. Positions 1383–1395 are enriched in polar residues; sequence QSPNRDSLYTSMP. Ser-1393, Ser-1428, and Ser-1449 each carry phosphoserine.

This sequence belongs to the G-protein coupled receptor 2 family. Adhesion G-protein coupled receptor (ADGR) subfamily. In terms of assembly, heterodimer of 2 chains generated by proteolytic processing; the large extracellular N-terminal fragment and the membrane-bound C-terminal fragment predominantly remain associated and non-covalently linked. Autoproteolytically processed at the GPS region of the GAIN-B domain; this cleavage modulates receptor activity. Ubiquitously expressed.

It is found in the postsynaptic cell membrane. With respect to regulation, forms a heterodimer of 2 chains generated by proteolytic processing that remain associated through non-covalent interactions mediated by the GAIN-B domain. In the inactivated receptor, the Stachel sequence (also named stalk) is embedded in the GAIN-B domain, where it adopts a beta-strand conformation. On activation, the Stachel moves into the 7 transmembrane region and adopts a twisted hook-shaped configuration that forms contacts within the receptor, leading to coupling of a G-alpha protein, which activates signaling. The cleaved GAIN-B and N-terminal domains can then dissociate from the rest of the receptor. Orphan adhesion G-protein coupled receptor (aGPCR), which mediates synapse specificity. Ligand binding causes a conformation change that triggers signaling via guanine nucleotide-binding proteins (G proteins) and modulates the activity of downstream effectors. Following G-protein coupled receptor activation, associates with cell adhesion molecules that are expressed at the surface of adjacent cells to direct synapse specificity. Specifically mediates the establishment of perforant-path synapses on CA1-region pyramidal neurons in the hippocampus. Localizes to postsynaptic spines in excitatory synapses in the S.lacunosum-moleculare and interacts with presynaptic cell adhesion molecules, such as teneurins, promoting synapse formation. The polypeptide is Adhesion G protein-coupled receptor L2 (ADGRL2) (Bos taurus (Bovine)).